The chain runs to 478 residues: Tubulin gamma chain (478 aa).

GTP is bound at residue 141–147; that stretch reads AGGTGSG. Residues 451 to 478 are disordered; the sequence is ISQKESSSLANENGNGANNKPGKSAMAL. The segment covering 459-468 has biased composition (polar residues); the sequence is LANENGNGAN.

The protein belongs to the tubulin family.

It is found in the cytoplasm. It localises to the cytoskeleton. The protein resides in the microtubule organizing center. The protein localises to the centrosome. In terms of biological role, tubulin is the major constituent of microtubules. The gamma chain is found at microtubule organizing centers (MTOC) such as the spindle poles or the centrosome, suggesting that it is involved in the minus-end nucleation of microtubule assembly. The polypeptide is Tubulin gamma chain (Reticulomyxa filosa).